Reading from the N-terminus, the 636-residue chain is 1-deoxy-D-xylulose-5-phosphate synthase (636 aa).

Thiamine diphosphate contacts are provided by residues H74 and 115–117 (GHS). D146 is a Mg(2+) binding site. Residues 147-148 (GA), N175, Y286, and E367 each bind thiamine diphosphate. Mg(2+) is bound at residue N175.

The protein belongs to the transketolase family. DXPS subfamily. As to quaternary structure, homodimer. Requires Mg(2+) as cofactor. The cofactor is thiamine diphosphate.

It catalyses the reaction D-glyceraldehyde 3-phosphate + pyruvate + H(+) = 1-deoxy-D-xylulose 5-phosphate + CO2. The protein operates within metabolic intermediate biosynthesis; 1-deoxy-D-xylulose 5-phosphate biosynthesis; 1-deoxy-D-xylulose 5-phosphate from D-glyceraldehyde 3-phosphate and pyruvate: step 1/1. Functionally, catalyzes the acyloin condensation reaction between C atoms 2 and 3 of pyruvate and glyceraldehyde 3-phosphate to yield 1-deoxy-D-xylulose-5-phosphate (DXP). The chain is 1-deoxy-D-xylulose-5-phosphate synthase from Halothermothrix orenii (strain H 168 / OCM 544 / DSM 9562).